The chain runs to 306 residues: Glutathione transport system permease protein GsiC (306 aa).

The Cytoplasmic portion of the chain corresponds to 1–8 (MLNYVIKR). A helical transmembrane segment spans residues 9-29 (LLGLIPTLFIVSVLVFLFVHM). Residues 30 to 102 (LPGDPARLIA…SRFMPTLWLT (73 aa)) are Periplasmic-facing. The ABC transmembrane type-1 domain occupies 95 to 292 (FMPTLWLTIT…LEFILINLVV (198 aa)). The helical transmembrane segment at 103–123 (ITSMVWAVIFGMAAGIIAAVW) threads the bilayer. Residues 124 to 134 (RNRWPDRLSMT) lie on the Cytoplasmic side of the membrane. The chain crosses the membrane as a helical span at residues 135 to 155 (IAVSGISFPAFALGMLLIQVF). Residues 156 to 168 (SVELGWLPTVGAD) are Periplasmic-facing. Residues 169–189 (SWQHYILPSLTLGAAVAAVMA) form a helical membrane-spanning segment. Topologically, residues 190–228 (RFTRASFVDVLSEDYMRTARAKGVSETWVVLKHGLRNAM) are cytoplasmic. Residues 229 to 249 (IPVVTMMGLQFGFLLGGSIVV) traverse the membrane as a helical segment. Over 250 to 277 (EKVFNWPGLGRLLVDSVEMRDYPVIQAE) the chain is Periplasmic. The helical transmembrane segment at 278–298 (ILLFSLEFILINLVVDVLYAA) threads the bilayer. The Cytoplasmic segment spans residues 299-306 (INPAIRYK).

The protein belongs to the binding-protein-dependent transport system permease family. The complex is composed of two ATP-binding proteins (GsiA), two transmembrane proteins (GsiC and GsiD) and a solute-binding protein (GsiB).

The protein localises to the cell inner membrane. Part of the ABC transporter complex GsiABCD involved in glutathione import. Probably responsible for the translocation of the substrate across the membrane. The chain is Glutathione transport system permease protein GsiC from Escherichia coli O1:K1 / APEC.